Consider the following 164-residue polypeptide: Transcription factor MafF (164 aa).

Residues 51–76 (RLKQRRRTLKNRGYAASCRVKRVCQK) are basic motif. The region spanning 51 to 114 (RLKQRRRTLK…DALRGKCEAL (64 aa)) is the bZIP domain. The segment at 79 to 93 (LQKQKSELEREVDKL) is leucine-zipper. A disordered region spans residues 141 to 164 (KSTPGSGSGPAHGPDPAHGPASCS). Over residues 149-164 (GPAHGPDPAHGPASCS) the composition is skewed to low complexity.

Belongs to the bZIP family. Maf subfamily. Monomer and homo- or heterodimer. Interacts with MIP. Forms high affinity heterodimers with members of the CNC-bZIP family such as NFE2L1/NRF1. As to expression, expressed in the term myometrium and kidney.

Its subcellular location is the nucleus. Functionally, since they lack a putative transactivation domain, the small Mafs behave as transcriptional repressors when they dimerize among themselves. However, they seem to serve as transcriptional activators by dimerizing with other (usually larger) basic-zipper proteins, such as NFE2L1/NRF1, and recruiting them to specific DNA-binding sites. Interacts with the upstream promoter region of the oxytocin receptor gene. May be a transcriptional enhancer in the up-regulation of the oxytocin receptor gene at parturition. This is Transcription factor MafF (MAFF) from Homo sapiens (Human).